A 252-amino-acid polypeptide reads, in one-letter code: Neurotrophic factor BDNF precursor form (252 aa).

The signal sequence occupies residues 1–18 (MTILFLTMVISYFGCMKA). A propeptide spanning residues 19–133 (APMKEANVRG…AANMSMRVRR (115 aa)) is cleaved from the precursor. The tract at residues 43–62 (LESVNGPKAGSRGLTSSSSS) is disordered. Asn-126 is a glycosylation site (N-linked (GlcNAc...) asparagine). Intrachain disulfides connect Cys-146–Cys-213, Cys-191–Cys-242, and Cys-201–Cys-244.

This sequence belongs to the NGF-beta family. Monomers and homodimers. Binds to NTRK2/TRKB. Can form heterodimers with other neurotrophin family members, such as NTF3 and NTF4 (in vitro), but the physiological relevance of this is not clear. BDNF precursor form: interacts with the heterodimer formed by NGFR and SORCS2. Mature BDNF has much lower affinity for the heterodimer formed by NGFR and SORCS2. N-glycosylated and glycosulfated, contrary to mature BDNF. Post-translationally, mature BDNF is produced by proteolytic removal of the propeptide, catalyzed by a FURIN family member. In addition, the precursor form is proteolytically cleaved within the propeptide, but this is not an obligatory intermediate for the production of mature BDNF. Can be converted into mature BDNF by plasmin (PLG). As to expression, brain and central nervous system.

It is found in the secreted. Its function is as follows. Important signaling molecule that activates signaling cascades downstream of NTRK2. During development, promotes the survival and differentiation of selected neuronal populations of the peripheral and central nervous systems. Participates in axonal growth, pathfinding and in the modulation of dendritic growth and morphology. Major regulator of synaptic transmission and plasticity at adult synapses in many regions of the CNS. The versatility of BDNF is emphasized by its contribution to a range of adaptive neuronal responses including long-term potentiation (LTP), long-term depression (LTD), certain forms of short-term synaptic plasticity, as well as homeostatic regulation of intrinsic neuronal excitability. Functionally, important signaling molecule that activates signaling cascades downstream of NTRK2. Activates signaling cascades via the heterodimeric receptor formed by NGFR and SORCS2. Signaling via NGFR and SORCS2 plays a role in synaptic plasticity and long-term depression (LTD). Binding to NGFR and SORCS2 promotes neuronal apoptosis. Promotes neuronal growth cone collapse. In Sus scrofa (Pig), this protein is Neurotrophic factor BDNF precursor form (BDNF).